We begin with the raw amino-acid sequence, 447 residues long: GTPase Der (447 aa).

2 consecutive EngA-type G domains span residues 3–167 (PVVA…HLED) and 180–353 (IKLA…KAAN). GTP contacts are provided by residues 9-16 (GRPNVGKS), 56-60 (DTGGF), 119-122 (NKAE), 186-193 (GRPNVGKS), 233-237 (DTAGL), and 298-301 (NKWD). A KH-like domain is found at 354-438 (CKMSTPILTR…PMRIEFKSST (85 aa)).

Belongs to the TRAFAC class TrmE-Era-EngA-EngB-Septin-like GTPase superfamily. EngA (Der) GTPase family. Associates with the 50S ribosomal subunit.

Functionally, GTPase that plays an essential role in the late steps of ribosome biogenesis. The sequence is that of GTPase Der from Albidiferax ferrireducens (strain ATCC BAA-621 / DSM 15236 / T118) (Rhodoferax ferrireducens).